A 173-amino-acid polypeptide reads, in one-letter code: Microfibrillar-associated protein 5 (173 aa).

An N-terminal signal peptide occupies residues 1-21; it reads MSLLGPKVLLFLAAFIITSDW. The Cell attachment site motif lies at 30-32; sequence RGD. Thr-54 carries O-linked (GalNAc...) threonine glycosylation. N-linked (GlcNAc...) asparagine glycosylation is present at Asn-79.

It belongs to the MFAP family. Interacts with TGFB2. Interacts with BMP2. Interacts with FBN1 (via N-terminal domain) and FBN2. Post-translationally, forms intermolecular disulfide bonds either with other MAGP-2 molecules or with other components of the microfibrils. In terms of processing, N- and O-glycosylated. O-glycosylated with core 1 or possibly core 8 glycans. O-glycan heterogeneity at Thr-54: HexHexNAc (major) and HexHexNAc + sulfate (minor).

It localises to the secreted. The protein localises to the extracellular space. Its subcellular location is the extracellular matrix. Functionally, may play a role in hematopoiesis. In the cardiovascular system, could regulate growth factors or participate in cell signaling in maintaining large vessel integrity. Component of the elastin-associated microfibrils. This is Microfibrillar-associated protein 5 (MFAP5) from Homo sapiens (Human).